We begin with the raw amino-acid sequence, 513 residues long: Cytochrome P450 monooxygenase CYP3 (513 aa).

The disordered stretch occupies residues 1-21 (MLPRSLGHSTSELSPPFDGPN). Residue cysteine 451 coordinates heme.

It belongs to the cytochrome P450 family. Heme serves as cofactor.

The protein operates within secondary metabolite biosynthesis. Cytochrome P450 monooxygenase; part of the gene cluster that mediates the biosynthesis of a tyrosine-derived cytochalasan acting as a fungal signal recognized by resistant rice plants and leads to avirulence in Pi33 resistant rice cultivars. The first step in the pathway is catalyzed by the hybrid PKS-NRPS ACE1, assisted by the enoyl reductase RAP1, that are responsible for fusion of the tyrosine precursor and the polyketide backbone. The polyketide synthase module (PKS) of ACE1 is responsible for the synthesis of the polyketide backbone and the downstream nonribosomal peptide synthetase (NRPS) amidates the carboxyl end of the polyketide with the tyrosine precursor. Because ACE1 lacks a designated enoylreductase (ER) domain, the required activity is provided the enoyl reductase RAP1. Reduction by the hydrolyase ORFZ, followed by dehydration and intra-molecular Diels-Alder cyclization by the Diels-Alderase ORF3 then yield the required isoindolone-fused macrocycle. A number of oxidative steps catalyzed by the tailoring enzymes identified within the cluster, including cytochrome P450 monooxygenases CYP1 to CYP4, the FAD-linked oxidoreductase OXR2 and the short-chain dehydrogenase/reductase OXR1, are further required to afford the final cytochalasans that confer avirulence and which have still to be identified. The monooxygenase CYP1 has been shown to be a site-selective C-18 hydroxylase whereas the function of CYP3 is the site-selective epoxidation of the C-6/C-7 olefin that is present in some intermediate compounds. Finally, SYN2 and RAP2 are not required for avirulence in Pi33 resistant rice cultivars. The protein is Cytochrome P450 monooxygenase CYP3 of Pyricularia oryzae (strain 70-15 / ATCC MYA-4617 / FGSC 8958) (Rice blast fungus).